We begin with the raw amino-acid sequence, 721 residues long: MSSKRKVELCDSLLTWMQTFQVSGPCSSYEDLTGGVAIAQVLNRIDPSWFNEAWLVRVKKDTTENWRLKVSNLKRILQSVLEYYQDVLGHPVSDDHIPDVALIGEFSNDTELRKMVQLVLGCAISCDKKEEHIQQIMTLGESVQQAVMESIQELLSKAPSDAVTSESFINYDSQSRKYYFLSEDNDEKNEILQRCHDLEQQVSLLMEEKKNMMGENRTLKEQQEQSGMGTPQLFNKKLLLLQSQIEQLQEENYRLESSRDDYRQRCQELDRDVQELQQRNQDLTGLAHESQALRDEMDVLRHSSDRVGKLESLVDSYKKKLEDLGDLRRQVKLLEERNTMYMQRTFQLEEDLHKANASRGQVESLSRQVQELHKKHSTESLRAEKWQFEFQTLKEKFEALQKERERLIAERDSLRETNDELRCSHLQQTCLGQADLLLSGSSPPLENLAAEIVPAELRETVIRLQQENKMLCAQEASYHERLCDLQNFLEESNRSKNRLESESRLQQQQIKGLKAQVEELQKQLREQGNRAEDSSQLKRKLEEHLEMLHDAHSELQKKREYIETLEPKADLNMSRKVDELQQILHQKEEDMRAMEERYKRYVDKARTVIKSLDPKQQNYIPPEIQALKNQLQEKDTRIRHLETDYEKTKVQRDQEEKLIISAWYNMGMALHQKSTDEKTQPPNGAQSFLAQQRLATNARRGQISRSHTLLPRYTDKRQSLS.

Residues 7–123 (VELCDSLLTW…KMVQLVLGCA (117 aa)) enclose the Calponin-homology (CH) domain. Coiled-coil stretches lie at residues 181–425 (LSED…RCSH) and 484–659 (DLQN…EKLI). Positions 696–721 (TNARRGQISRSHTLLPRYTDKRQSLS) are disordered.

It belongs to the hook family. As to quaternary structure, interacts with microtubules.

It localises to the cytoplasm. It is found in the cytoskeleton. The protein resides in the microtubule organizing center. The protein localises to the centrosome. Its function is as follows. May function to promote vesicle trafficking and/or fusion. May contribute to the establishment and maintenance of centrosome function. This is Protein Hook homolog 2 (hook2) from Xenopus laevis (African clawed frog).